The primary structure comprises 87 residues: Small ribosomal subunit protein bS20 (87 aa).

The disordered stretch occupies residues 1-20; that stretch reads MANSAQARKRARTALKQRAH. Residues 7–19 are compositionally biased toward basic residues; that stretch reads ARKRARTALKQRA.

This sequence belongs to the bacterial ribosomal protein bS20 family.

Binds directly to 16S ribosomal RNA. The protein is Small ribosomal subunit protein bS20 of Chromobacterium violaceum (strain ATCC 12472 / DSM 30191 / JCM 1249 / CCUG 213 / NBRC 12614 / NCIMB 9131 / NCTC 9757 / MK).